Reading from the N-terminus, the 78-residue chain is NAD(P)H-quinone oxidoreductase subunit O (78 aa).

The protein belongs to the complex I NdhO subunit family. NDH-1 can be composed of about 15 different subunits; different subcomplexes with different compositions have been identified which probably have different functions.

The protein resides in the cellular thylakoid membrane. The catalysed reaction is a plastoquinone + NADH + (n+1) H(+)(in) = a plastoquinol + NAD(+) + n H(+)(out). It carries out the reaction a plastoquinone + NADPH + (n+1) H(+)(in) = a plastoquinol + NADP(+) + n H(+)(out). In terms of biological role, NDH-1 shuttles electrons from an unknown electron donor, via FMN and iron-sulfur (Fe-S) centers, to quinones in the respiratory and/or the photosynthetic chain. The immediate electron acceptor for the enzyme in this species is believed to be plastoquinone. Couples the redox reaction to proton translocation, and thus conserves the redox energy in a proton gradient. Cyanobacterial NDH-1 also plays a role in inorganic carbon-concentration. This is NAD(P)H-quinone oxidoreductase subunit O from Prochlorococcus marinus (strain MIT 9312).